Here is an 89-residue protein sequence, read N- to C-terminus: Large ribosomal subunit protein bL27 (89 aa).

The segment at 1–21 is disordered; it reads MAHKKAGGSSRNGRDSQSKRL.

This sequence belongs to the bacterial ribosomal protein bL27 family.

The polypeptide is Large ribosomal subunit protein bL27 (Rhizobium leguminosarum bv. trifolii (strain WSM2304)).